The sequence spans 110 residues: Methionine-R-sulfoxide reductase B1-A (110 aa).

One can recognise a MsrB domain in the interval 1–104 (MSFCSFSGGE…FSSSLKFIPK (104 aa)). Cys23, Cys26, Cys69, and Cys72 together coordinate Zn(2+). Sec93 (nucleophile) is an active-site residue. Sec93 is a non-standard amino acid (selenocysteine).

The protein belongs to the MsrB Met sulfoxide reductase family. The cofactor is Zn(2+). In terms of tissue distribution, in the embryo, expressed in the polster, paraxial mesoderm, tectum, otic vesicle and liver.

Its subcellular location is the cytoplasm. The protein resides in the nucleus. The protein localises to the cytoskeleton. It catalyses the reaction L-methionyl-[protein] + [thioredoxin]-disulfide + H2O = L-methionyl-(R)-S-oxide-[protein] + [thioredoxin]-dithiol. The enzyme catalyses [thioredoxin]-disulfide + L-methionine + H2O = L-methionine (R)-S-oxide + [thioredoxin]-dithiol. In terms of biological role, methionine-sulfoxide reductase that specifically reduces methionine (R)-sulfoxide back to methionine. While in many cases, methionine oxidation is the result of random oxidation following oxidative stress, methionine oxidation is also a post-translational modification that takes place on specific residue. Acts as a regulator of actin assembly by reducing methionine (R)-sulfoxide mediated by MICALs (mical1, mical2 or mical3) on actin, thereby promoting filament repolymerization. Plays a role in innate immunity by reducing oxidized actin, leading to actin repolymerization in macrophages. The sequence is that of Methionine-R-sulfoxide reductase B1-A (msrb1) from Danio rerio (Zebrafish).